A 1241-amino-acid chain; its full sequence is ATP-dependent helicase/nuclease subunit A (1241 aa).

In terms of domain architecture, UvrD-like helicase ATP-binding spans 12-485 (SQWTDDQWKA…IDLAKNFRSR (474 aa)). 33-40 (AAAGSGKT) is an ATP binding site. A UvrD-like helicase C-terminal domain is found at 505-805 (GEIDYDADAE…RIMTIHKSKG (301 aa)).

This sequence belongs to the helicase family. AddA subfamily. As to quaternary structure, heterodimer of AddA and AddB/RexB. It depends on Mg(2+) as a cofactor.

It carries out the reaction Couples ATP hydrolysis with the unwinding of duplex DNA by translocating in the 3'-5' direction.. The enzyme catalyses ATP + H2O = ADP + phosphate + H(+). In terms of biological role, the heterodimer acts as both an ATP-dependent DNA helicase and an ATP-dependent, dual-direction single-stranded exonuclease. Recognizes the chi site generating a DNA molecule suitable for the initiation of homologous recombination. The AddA nuclease domain is required for chi fragment generation; this subunit has the helicase and 3' -&gt; 5' nuclease activities. This Bacillus cereus (strain ATCC 14579 / DSM 31 / CCUG 7414 / JCM 2152 / NBRC 15305 / NCIMB 9373 / NCTC 2599 / NRRL B-3711) protein is ATP-dependent helicase/nuclease subunit A.